Reading from the N-terminus, the 228-residue chain is FAS1 domain-containing protein NCU02579 (228 aa).

Positions 1 to 18 (MRFTPYLVLAPTAAVAFA) are cleaved as a signal peptide. The disordered stretch occupies residues 50-74 (PAVGLGPAMPPSGAPQADGPANAGG). One can recognise an FAS1 domain in the interval 77–225 (SVMLSDVMGR…GEVWILKGVR (149 aa)).

It is found in the vacuole. This Neurospora crassa (strain ATCC 24698 / 74-OR23-1A / CBS 708.71 / DSM 1257 / FGSC 987) protein is FAS1 domain-containing protein NCU02579.